Consider the following 524-residue polypeptide: Light-independent protochlorophyllide reductase subunit B (524 aa).

[4Fe-4S] cluster is bound at residue Asp-36. Catalysis depends on Asp-290, which acts as the Proton donor. 425-426 (GL) contacts substrate.

This sequence belongs to the ChlB/BchB/BchZ family. As to quaternary structure, protochlorophyllide reductase is composed of three subunits; ChlL, ChlN and ChlB. Forms a heterotetramer of two ChlB and two ChlN subunits. It depends on [4Fe-4S] cluster as a cofactor.

The catalysed reaction is chlorophyllide a + oxidized 2[4Fe-4S]-[ferredoxin] + 2 ADP + 2 phosphate = protochlorophyllide a + reduced 2[4Fe-4S]-[ferredoxin] + 2 ATP + 2 H2O. It participates in porphyrin-containing compound metabolism; chlorophyll biosynthesis (light-independent). Functionally, component of the dark-operative protochlorophyllide reductase (DPOR) that uses Mg-ATP and reduced ferredoxin to reduce ring D of protochlorophyllide (Pchlide) to form chlorophyllide a (Chlide). This reaction is light-independent. The NB-protein (ChlN-ChlB) is the catalytic component of the complex. The polypeptide is Light-independent protochlorophyllide reductase subunit B (Parasynechococcus marenigrum (strain WH8102)).